The primary structure comprises 361 residues: Probable galacturonosyltransferase-like 5 (361 aa).

Topologically, residues 1–6 (MHWITR) are cytoplasmic. The helical; Signal-anchor for type II membrane protein transmembrane segment at 7 to 27 (FSAFFSAALAMILLSPSLQSF) threads the bilayer. At 28-361 (SPAAAIRSSH…APYDLYKHSH (334 aa)) the chain is on the lumenal side. 2 N-linked (GlcNAc...) asparagine glycosylation sites follow: N218 and N234.

The protein belongs to the glycosyltransferase 8 family.

The protein localises to the golgi apparatus membrane. The protein operates within glycan metabolism; pectin biosynthesis. May be involved in pectin and/or xylans biosynthesis in cell walls. This chain is Probable galacturonosyltransferase-like 5 (GATL5), found in Arabidopsis thaliana (Mouse-ear cress).